We begin with the raw amino-acid sequence, 290 residues long: Outer dense fiber protein 4 (290 aa).

S28 bears the Phosphoserine mark. The next 4 helical transmembrane spans lie at 44 to 64, 132 to 152, 164 to 184, and 201 to 221; these read AQVV…LMVF, ISFI…HLPY, LIGI…LLLF, and IGWS…CGIL. The disordered stretch occupies residues 262 to 290; that stretch reads ADILDPTQDDQKPLSSDNIALPPNPDTTD.

It localises to the membrane. Functionally, component of the outer dense fibers (ODF) of spermatozoa which could be involved in sperm tail structure, sperm movement and general organization of cellular cytoskeleton. The polypeptide is Outer dense fiber protein 4 (Odf4) (Rattus norvegicus (Rat)).